A 336-amino-acid chain; its full sequence is Galactose/methyl galactoside import permease protein MglC (336 aa).

8 consecutive transmembrane segments (helical) span residues 17-37 (AIYF…PTFL), 53-73 (LIIA…LSAG), 107-127 (VVIL…GLVI), 128-148 (AYLN…IYGF), 181-201 (FKLS…WIMW), 231-251 (LVAI…LEAG), 257-277 (TNNL…VGGV), and 306-326 (IGVN…LAVA).

Belongs to the binding-protein-dependent transport system permease family. AraH/RbsC subfamily. As to quaternary structure, the complex is composed of one ATP-binding protein (MglA), two transmembrane proteins (MglC) and a solute-binding protein (MglB).

It is found in the cell inner membrane. Functionally, part of the ABC transporter complex MglABC involved in galactose/methyl galactoside import. Probably responsible for the translocation of the substrate across the membrane. The protein is Galactose/methyl galactoside import permease protein MglC (mglC) of Haemophilus influenzae (strain ATCC 51907 / DSM 11121 / KW20 / Rd).